Here is a 273-residue protein sequence, read N- to C-terminus: Dermonecrotic toxin SdSicTox-betaIF1 (273 aa).

The active site involves His5. 2 residues coordinate Mg(2+): Glu25 and Asp27. His41 functions as the Nucleophile in the catalytic mechanism. Cystine bridges form between Cys45–Cys51 and Cys47–Cys189.

Belongs to the arthropod phospholipase D family. Class II subfamily. Mg(2+) serves as cofactor. Expressed by the venom gland.

The protein resides in the secreted. It catalyses the reaction an N-(acyl)-sphingosylphosphocholine = an N-(acyl)-sphingosyl-1,3-cyclic phosphate + choline. It carries out the reaction an N-(acyl)-sphingosylphosphoethanolamine = an N-(acyl)-sphingosyl-1,3-cyclic phosphate + ethanolamine. The enzyme catalyses a 1-acyl-sn-glycero-3-phosphocholine = a 1-acyl-sn-glycero-2,3-cyclic phosphate + choline. The catalysed reaction is a 1-acyl-sn-glycero-3-phosphoethanolamine = a 1-acyl-sn-glycero-2,3-cyclic phosphate + ethanolamine. In terms of biological role, dermonecrotic toxins cleave the phosphodiester linkage between the phosphate and headgroup of certain phospholipids (sphingolipid and lysolipid substrates), forming an alcohol (often choline) and a cyclic phosphate. This toxin acts on sphingomyelin (SM). It may also act on ceramide phosphoethanolamine (CPE), lysophosphatidylcholine (LPC) and lysophosphatidylethanolamine (LPE), but not on lysophosphatidylserine (LPS), and lysophosphatidylglycerol (LPG). It acts by transphosphatidylation, releasing exclusively cyclic phosphate products as second products. Induces dermonecrosis, hemolysis, increased vascular permeability, edema, inflammatory response, and platelet aggregation. In Sicarius cf. damarensis (strain GJB-2008) (Six-eyed sand spider), this protein is Dermonecrotic toxin SdSicTox-betaIF1.